The chain runs to 441 residues: COBRA-like protein 2 (441 aa).

The signal sequence occupies residues 1 to 28 (MNILFSRFSFLLLFLCSWTSFTFTTTEA). N-linked (GlcNAc...) asparagine glycosylation is found at Asn-37, Asn-162, Asn-170, Asn-209, Asn-234, Asn-249, Asn-314, Asn-329, and Asn-348. The GPI-anchor amidated asparagine moiety is linked to residue Asn-417. Positions 418–441 (ASPNIATSPFVILLITFLSVLILM) are cleaved as a propeptide — removed in mature form.

Belongs to the COBRA family. Expressed in roots, stems, leaves, flowers and siliques.

Its subcellular location is the cell membrane. This chain is COBRA-like protein 2 (COBL2), found in Arabidopsis thaliana (Mouse-ear cress).